A 561-amino-acid chain; its full sequence is Developmental and secondary metabolism regulator veA (561 aa).

3 disordered regions span residues 1 to 23, 41 to 60, and 258 to 361; these read MANRPSLMPPHNETEHSVSRITR, ARACGAGAKSSADRRPVDPP, and AYAR…PQGI. A compositionally biased stretch (basic and acidic residues) spans 12-23; that stretch reads NETEHSVSRITR. The 209-residue stretch at 25-233 folds into the Velvet domain; the sequence is GKQLTYKLSV…AEQGCRVRIR (209 aa). Positions 39 to 44 match the Nuclear localization signal motif; it reads ERARAC. The segment covering 258–268 has biased composition (basic and acidic residues); sequence AYARSSDRFTT. A compositionally biased stretch (polar residues) spans 324–339; that stretch reads SHSQTPSYQSHLSFGS. Residues 347-357 are compositionally biased toward pro residues; the sequence is PHMPPTPPPVA. Positions 438-485 are PEST; sequence RPQTPNLPAMPPPKPLSNDYANHVVPSVECTSPGGSGGGGYDNVRGKR. Residues 491–524 form a disordered region; the sequence is GPTYGKRSHEDTFGLDDRSMQNGMRPDTEPYPAY. Basic and acidic residues predominate over residues 497 to 509; that stretch reads RSHEDTFGLDDRS.

The protein belongs to the velvet family. VeA subfamily. As to quaternary structure, component of the heterotrimeric velvet complex composed of laeA, veA and velB; velA acting as a bridging protein between laeA and velB. Interacts with kapA. Interacts with vosA and velc.

It localises to the nucleus. The protein localises to the cytoplasm. Its function is as follows. Component of the velvet transcription factor complex that controls sexual/asexual developmental ratio in response to light, promoting sexual development in the darkness while stimulating asexual sporulation under illumination. The velvet complex acts as a global regulator for secondary metabolite gene expression. Controls the expression of the penicillin gene cluster. Positively controls the expression of the class V chitinase chiB1. Positively controls the expression of the transcription factor atfA. Required for cell wall integrity and controls hyphal branching. The polypeptide is Developmental and secondary metabolism regulator veA (Penicillium rubens (strain ATCC 28089 / DSM 1075 / NRRL 1951 / Wisconsin 54-1255) (Penicillium chrysogenum)).